Reading from the N-terminus, the 156-residue chain is Small ribosomal subunit protein uS7 (156 aa).

It belongs to the universal ribosomal protein uS7 family. In terms of assembly, part of the 30S ribosomal subunit. Contacts proteins S9 and S11.

Functionally, one of the primary rRNA binding proteins, it binds directly to 16S rRNA where it nucleates assembly of the head domain of the 30S subunit. Is located at the subunit interface close to the decoding center, probably blocks exit of the E-site tRNA. This Blochmanniella pennsylvanica (strain BPEN) protein is Small ribosomal subunit protein uS7.